We begin with the raw amino-acid sequence, 115 residues long: T cell receptor beta variable 7-8 (115 aa).

The signal sequence occupies residues 1-21; sequence MGTRLLCWVVLGFLGTDHTGA. Residues 22 to 115 enclose the Ig-like domain; sequence GVSQSPRYKV…SAVYLCASSL (94 aa). A disulfide bridge connects residues cysteine 42 and cysteine 111.

Alpha-beta TR is a heterodimer composed of an alpha and beta chain; disulfide-linked. The alpha-beta TR is associated with the transmembrane signaling CD3 coreceptor proteins to form the TR-CD3 (TcR or TCR). The assembly of alpha-beta TR heterodimers with CD3 occurs in the endoplasmic reticulum where a single alpha-beta TR heterodimer associates with one CD3D-CD3E heterodimer, one CD3G-CD3E heterodimer and one CD247 homodimer forming a stable octameric structure. CD3D-CD3E and CD3G-CD3E heterodimers preferentially associate with TR alpha and TR beta chains, respectively. The association of the CD247 homodimer is the last step of TcR assembly in the endoplasmic reticulum and is required for transport to the cell surface.

It is found in the cell membrane. In terms of biological role, v region of the variable domain of T cell receptor (TR) beta chain that participates in the antigen recognition. Alpha-beta T cell receptors are antigen specific receptors which are essential to the immune response and are present on the cell surface of T lymphocytes. Recognize peptide-major histocompatibility (MH) (pMH) complexes that are displayed by antigen presenting cells (APC), a prerequisite for efficient T cell adaptive immunity against pathogens. Binding of alpha-beta TR to pMH complex initiates TR-CD3 clustering on the cell surface and intracellular activation of LCK that phosphorylates the ITAM motifs of CD3G, CD3D, CD3E and CD247 enabling the recruitment of ZAP70. In turn ZAP70 phosphorylates LAT, which recruits numerous signaling molecules to form the LAT signalosome. The LAT signalosome propagates signal branching to three major signaling pathways, the calcium, the mitogen-activated protein kinase (MAPK) kinase and the nuclear factor NF-kappa-B (NF-kB) pathways, leading to the mobilization of transcription factors that are critical for gene expression and essential for T cell growth and differentiation. The T cell repertoire is generated in the thymus, by V-(D)-J rearrangement. This repertoire is then shaped by intrathymic selection events to generate a peripheral T cell pool of self-MH restricted, non-autoaggressive T cells. Post-thymic interaction of alpha-beta TR with the pMH complexes shapes TR structural and functional avidity. The chain is T cell receptor beta variable 7-8 from Homo sapiens (Human).